A 348-amino-acid chain; its full sequence is Alternative squalene epoxidase (348 aa).

The span at 1–10 (MLVDRVENNE) shows a compositional bias: basic and acidic residues. The segment at 1-26 (MLVDRVENNEKQQQQMASSSDAMSDS) is disordered. A compositionally biased stretch (low complexity) spans 12–26 (QQQQMASSSDAMSDS). The next 3 helical transmembrane spans lie at 55–75 (AIAWSGALVWPLMLTVPLLLS), 105–125 (LGLVLGILAVAVGQVFVWIFF), and 153–173 (GLLTHIGQPEGFVLLIGYLAI). Residues 197–332 (FMCLVLQDGI…FMWFDQLGGT (136 aa)) form the Fatty acid hydroxylase domain. A Histidine box-1 motif is present at residues 211-215 (HVLEH). The short motif at 226–230 (HKPHH) is the Histidine box-2 element. 2 consecutive transmembrane segments (helical) span residues 243–263 (GSLMDTFCMIIIPLFVTANLV) and 277–297 (SYACWLTLIHSEYVFPWDGIF). The Histidine box-3 motif lies at 308-312 (HHVHH).

This sequence belongs to the sterol desaturase family. In terms of assembly, interacts with cytochrome b5/PHATRDRAFT_30770. Requires Fe cation as cofactor.

It localises to the endoplasmic reticulum membrane. It catalyses the reaction squalene + 2 Fe(II)-[cytochrome b5] + O2 + 2 H(+) = (S)-2,3-epoxysqualene + 2 Fe(III)-[cytochrome b5] + H2O. Its pathway is terpene metabolism; lanosterol biosynthesis; lanosterol from farnesyl diphosphate. With respect to regulation, the activity of this enzyme is not inhibited by terbinafine, an established inhibitor of the conventional flavoprotein squalene epoxidase. In terms of biological role, catalyzes the stereospecific epoxidation of squalene at the terminal double bond to form (S)-2,3-epoxysqualene, the first oxygenation step in sterol biosynthesis. This Phaeodactylum tricornutum (strain CCAP 1055/1) protein is Alternative squalene epoxidase.